A 369-amino-acid chain; its full sequence is tRNA-specific 2-thiouridylase MnmA (369 aa).

Residues 12-19 and M38 contribute to the ATP site; that span reads GMSGGVDS. The interval 98 to 100 is interaction with target base in tRNA; it reads NPD. The active-site Nucleophile is C103. A disulfide bond links C103 and C200. An ATP-binding site is contributed by G128. The interaction with tRNA stretch occupies residues 150-152; that stretch reads KDQ. The Cysteine persulfide intermediate role is filled by C200. The interval 312–313 is interaction with tRNA; sequence RY.

The protein belongs to the MnmA/TRMU family. Interacts with TusE.

The protein resides in the cytoplasm. The enzyme catalyses S-sulfanyl-L-cysteinyl-[protein] + uridine(34) in tRNA + AH2 + ATP = 2-thiouridine(34) in tRNA + L-cysteinyl-[protein] + A + AMP + diphosphate + H(+). Catalyzes the 2-thiolation of uridine at the wobble position (U34) of tRNA(Lys), tRNA(Glu) and tRNA(Gln), leading to the formation of s(2)U34, the first step of tRNA-mnm(5)s(2)U34 synthesis. Sulfur is provided by IscS, via a sulfur-relay system. Binds ATP and its substrate tRNAs. This is tRNA-specific 2-thiouridylase MnmA from Sodalis glossinidius (strain morsitans).